Here is a 225-residue protein sequence, read N- to C-terminus: GrpE protein homolog 2, mitochondrial (225 aa).

The transit peptide at M1–F32 directs the protein to the mitochondrion. K142 carries the post-translational modification N6-acetyllysine.

The protein belongs to the GrpE family. As to quaternary structure, probable component of the PAM complex at least composed of a mitochondrial HSP70 protein, GRPEL1 or GRPEL2, TIMM44, TIMM16/PAM16 and TIMM14/DNAJC19.

The protein localises to the mitochondrion matrix. Functionally, essential component of the PAM complex, a complex required for the translocation of transit peptide-containing proteins from the inner membrane into the mitochondrial matrix in an ATP-dependent manner. Seems to control the nucleotide-dependent binding of mitochondrial HSP70 to substrate proteins. Stimulates ATPase activity of mt-HSP70. May also serve to modulate the interconversion of oligomeric (inactive) and monomeric (active) forms of mt-HSP70. In Pongo abelii (Sumatran orangutan), this protein is GrpE protein homolog 2, mitochondrial (GRPEL2).